A 159-amino-acid chain; its full sequence is Endoribonuclease YbeY (159 aa).

Zn(2+) contacts are provided by His125, His129, and His135.

It belongs to the endoribonuclease YbeY family. Zn(2+) serves as cofactor.

It is found in the cytoplasm. Its function is as follows. Single strand-specific metallo-endoribonuclease involved in late-stage 70S ribosome quality control and in maturation of the 3' terminus of the 16S rRNA. In Ligilactobacillus salivarius (strain UCC118) (Lactobacillus salivarius), this protein is Endoribonuclease YbeY.